The primary structure comprises 334 residues: Holliday junction branch migration complex subunit RuvB (334 aa).

Positions 1–182 (MDERLVSSEL…FGVLSRLEYY (182 aa)) are large ATPase domain (RuvB-L). Residues Leu21, Arg22, Gly63, Lys66, Thr67, Thr68, 129–131 (EDF), Arg172, Tyr182, and Arg219 each bind ATP. Residue Thr67 participates in Mg(2+) binding. The interval 183-253 (TRDELSEIVI…VAVDALERLQ (71 aa)) is small ATPAse domain (RuvB-S). The interval 256-334 (KLGLDHIDRK…HFKMEVPNHD (79 aa)) is head domain (RuvB-H). Residues Arg311 and Arg316 each coordinate DNA.

The protein belongs to the RuvB family. Homohexamer. Forms an RuvA(8)-RuvB(12)-Holliday junction (HJ) complex. HJ DNA is sandwiched between 2 RuvA tetramers; dsDNA enters through RuvA and exits via RuvB. An RuvB hexamer assembles on each DNA strand where it exits the tetramer. Each RuvB hexamer is contacted by two RuvA subunits (via domain III) on 2 adjacent RuvB subunits; this complex drives branch migration. In the full resolvosome a probable DNA-RuvA(4)-RuvB(12)-RuvC(2) complex forms which resolves the HJ.

It is found in the cytoplasm. It catalyses the reaction ATP + H2O = ADP + phosphate + H(+). The RuvA-RuvB-RuvC complex processes Holliday junction (HJ) DNA during genetic recombination and DNA repair, while the RuvA-RuvB complex plays an important role in the rescue of blocked DNA replication forks via replication fork reversal (RFR). RuvA specifically binds to HJ cruciform DNA, conferring on it an open structure. The RuvB hexamer acts as an ATP-dependent pump, pulling dsDNA into and through the RuvAB complex. RuvB forms 2 homohexamers on either side of HJ DNA bound by 1 or 2 RuvA tetramers; 4 subunits per hexamer contact DNA at a time. Coordinated motions by a converter formed by DNA-disengaged RuvB subunits stimulates ATP hydrolysis and nucleotide exchange. Immobilization of the converter enables RuvB to convert the ATP-contained energy into a lever motion, pulling 2 nucleotides of DNA out of the RuvA tetramer per ATP hydrolyzed, thus driving DNA branch migration. The RuvB motors rotate together with the DNA substrate, which together with the progressing nucleotide cycle form the mechanistic basis for DNA recombination by continuous HJ branch migration. Branch migration allows RuvC to scan DNA until it finds its consensus sequence, where it cleaves and resolves cruciform DNA. In Bacillus licheniformis (strain ATCC 14580 / DSM 13 / JCM 2505 / CCUG 7422 / NBRC 12200 / NCIMB 9375 / NCTC 10341 / NRRL NRS-1264 / Gibson 46), this protein is Holliday junction branch migration complex subunit RuvB.